Here is a 376-residue protein sequence, read N- to C-terminus: N-acetyldiaminopimelate deacetylase (376 aa).

Residue Asp-69 is part of the active site. Glu-127 acts as the Proton acceptor in catalysis.

The protein belongs to the peptidase M20A family. N-acetyldiaminopimelate deacetylase subfamily.

The catalysed reaction is N-acetyl-(2S,6S)-2,6-diaminopimelate + H2O = (2S,6S)-2,6-diaminopimelate + acetate. The protein operates within amino-acid biosynthesis; L-lysine biosynthesis via DAP pathway; LL-2,6-diaminopimelate from (S)-tetrahydrodipicolinate (acetylase route): step 3/3. In terms of biological role, catalyzes the conversion of N-acetyl-diaminopimelate to diaminopimelate and acetate. The chain is N-acetyldiaminopimelate deacetylase from Lactococcus lactis subsp. cremoris (strain SK11).